The chain runs to 219 residues: Cytidylate kinase (219 aa).

Residue 21–29 coordinates ATP; it reads GPAASGKGT.

This sequence belongs to the cytidylate kinase family. Type 1 subfamily.

The protein resides in the cytoplasm. The catalysed reaction is CMP + ATP = CDP + ADP. It catalyses the reaction dCMP + ATP = dCDP + ADP. This chain is Cytidylate kinase, found in Rickettsia felis (strain ATCC VR-1525 / URRWXCal2) (Rickettsia azadi).